The chain runs to 574 residues: Serine/arginine repetitive matrix protein 4 (574 aa).

Disordered regions lie at residues 45–217 (LETP…HGGD), 257–291 (IVQN…ITRS), 366–422 (DLIS…SYSL), 454–508 (YCSS…VSSR), and 526–574 (RSRS…RARR). The segment covering 51-72 (PKDDEEKVKAKDLVTKTHEKNG) has biased composition (basic and acidic residues). Basic residues-rich tracts occupy residues 73–88 (HIKR…RRAR), 102–120 (PKTK…RHRS), and 128–184 (VRKK…HRKA). A compositionally biased stretch (basic and acidic residues) spans 194–217 (NRSEDCEKSGFRDGGRSSDVHGGD). A compositionally biased stretch (polar residues) spans 275-289 (GNDTSSPPSSKTGIT). The span at 366 to 385 (DLISDRNRSPSHDRYEDGTR) shows a compositional bias: basic and acidic residues. Residues 405 to 422 (RSLSSGRRSYSRSSSYSL) are compositionally biased toward low complexity. A compositionally biased stretch (basic residues) spans 454–477 (YCSSCKSRKHSRRRPSSPMRKRRR). Positions 478 to 487 (DSPSHLEARR) are enriched in basic and acidic residues. Over residues 496–508 (IPYYRPSPSVSSR) the composition is skewed to low complexity. Residues 526–539 (RSRSCSRSRSRSHS) show a composition bias toward basic residues. Residues 540–559 (HTYSSYRSYSRSSSWNSLYS) are compositionally biased toward low complexity. Over residues 560 to 574 (RRSRSRSRSYSRARR) the composition is skewed to basic residues.

The protein belongs to the nSR100 family.

The protein localises to the nucleus. Functionally, splicing factor specifically required for neural cell differentiation. Acts in conjunction with nPTB/PTBP2 by binding directly to its regulated target transcripts and promotes neural-specific exon inclusion in many genes that function in neural cell differentiation. Required to promote the inclusion of neural-specific exon 10 in nPTB/PTBP2, leading to increased expression of neural-specific nPTB/PTBP2. The chain is Serine/arginine repetitive matrix protein 4 (srrm4) from Danio rerio (Zebrafish).